The sequence spans 336 residues: Anthranilate phosphoribosyltransferase (336 aa).

5-phospho-alpha-D-ribose 1-diphosphate-binding positions include G82, 85–86 (GD), T90, 92–95 (NVST), 110–118 (KHGNRSVSS), and S122. G82 is a binding site for anthranilate. S94 is a binding site for Mg(2+). N113 lines the anthranilate pocket. R168 is a binding site for anthranilate. Residues D227 and E228 each coordinate Mg(2+).

This sequence belongs to the anthranilate phosphoribosyltransferase family. As to quaternary structure, homodimer. It depends on Mg(2+) as a cofactor.

It catalyses the reaction N-(5-phospho-beta-D-ribosyl)anthranilate + diphosphate = 5-phospho-alpha-D-ribose 1-diphosphate + anthranilate. It participates in amino-acid biosynthesis; L-tryptophan biosynthesis; L-tryptophan from chorismate: step 2/5. Functionally, catalyzes the transfer of the phosphoribosyl group of 5-phosphorylribose-1-pyrophosphate (PRPP) to anthranilate to yield N-(5'-phosphoribosyl)-anthranilate (PRA). The polypeptide is Anthranilate phosphoribosyltransferase (Leptospira borgpetersenii serovar Hardjo-bovis (strain JB197)).